The sequence spans 550 residues: Glypican-1 (550 aa).

A signal peptide spans 1–20 (MRFFPWGFWLLCVASAPARG). Disulfide bonds link C29/C65, C59/C253, C66/C256, C188/C340, C243/C276, C265/C412, and C269/C398. 2 N-linked (GlcNAc...) asparagine glycosylation sites follow: N76 and N113. N382 carries N-linked (GlcNAc...) asparagine glycosylation. Disordered regions lie at residues 475 to 494 (FQDASDDMSGSGSGDSCPDD) and 502 to 522 (KSPSTRQPETHAIPKQSGHGV). The span at 481 to 494 (DMSGSGSGDSCPDD) shows a compositional bias: low complexity. S483, S485, and S487 each carry an O-linked (Xyl...) (heparan sulfate) serine glycan. G524 carries GPI-anchor amidated glycine lipidation. Residues 525–550 (ASSRSLPSAFLLFLSGASIVVQHLWR) constitute a propeptide, removed in mature form.

This sequence belongs to the glypican family. In terms of processing, O-glycosylated with heparan sulfate.

It is found in the cell membrane. The protein localises to the endosome. The protein resides in the secreted. Its subcellular location is the extracellular space. Functionally, cell surface proteoglycan that bears heparan sulfate. Modulates Wnt-signaling pathway. The protein is Glypican-1 (GPC1) of Gallus gallus (Chicken).